The sequence spans 635 residues: 4-hydroxy-3-methylbut-2-enyl diphosphate reductase (635 aa).

Positions 1–279 (MSIILAKKSG…KEAIFKMSNK (279 aa)) are 4-hydroxy-3-methylbut-2-enyl diphosphate reductase. [4Fe-4S] cluster is bound at residue cysteine 12. (2E)-4-hydroxy-3-methylbut-2-enyl diphosphate-binding residues include histidine 42 and histidine 77. Positions 42 and 77 each coordinate dimethylallyl diphosphate. Isopentenyl diphosphate-binding residues include histidine 42 and histidine 77. Position 99 (cysteine 99) interacts with [4Fe-4S] cluster. Position 127 (histidine 127) interacts with (2E)-4-hydroxy-3-methylbut-2-enyl diphosphate. Histidine 127 provides a ligand contact to dimethylallyl diphosphate. Isopentenyl diphosphate is bound at residue histidine 127. Glutamate 129 serves as the catalytic Proton donor. Threonine 163 lines the (2E)-4-hydroxy-3-methylbut-2-enyl diphosphate pocket. Cysteine 191 provides a ligand contact to [4Fe-4S] cluster. Serine 219, serine 220, asparagine 221, and serine 263 together coordinate (2E)-4-hydroxy-3-methylbut-2-enyl diphosphate. Dimethylallyl diphosphate is bound by residues serine 219, serine 220, asparagine 221, and serine 263. 4 residues coordinate isopentenyl diphosphate: serine 219, serine 220, asparagine 221, and serine 263. S1 motif domains lie at 298-373 (GQEV…LNRE), 380-455 (KEAF…ASRR), 476-544 (DTIK…LSIK), and 561-630 (GNIV…LSIK).

The protein in the N-terminal section; belongs to the IspH family. Requires [4Fe-4S] cluster as cofactor.

The enzyme catalyses isopentenyl diphosphate + 2 oxidized [2Fe-2S]-[ferredoxin] + H2O = (2E)-4-hydroxy-3-methylbut-2-enyl diphosphate + 2 reduced [2Fe-2S]-[ferredoxin] + 2 H(+). It carries out the reaction dimethylallyl diphosphate + 2 oxidized [2Fe-2S]-[ferredoxin] + H2O = (2E)-4-hydroxy-3-methylbut-2-enyl diphosphate + 2 reduced [2Fe-2S]-[ferredoxin] + 2 H(+). It participates in isoprenoid biosynthesis; dimethylallyl diphosphate biosynthesis; dimethylallyl diphosphate from (2E)-4-hydroxy-3-methylbutenyl diphosphate: step 1/1. It functions in the pathway isoprenoid biosynthesis; isopentenyl diphosphate biosynthesis via DXP pathway; isopentenyl diphosphate from 1-deoxy-D-xylulose 5-phosphate: step 6/6. In terms of biological role, catalyzes the conversion of 1-hydroxy-2-methyl-2-(E)-butenyl 4-diphosphate (HMBPP) into a mixture of isopentenyl diphosphate (IPP) and dimethylallyl diphosphate (DMAPP). Acts in the terminal step of the DOXP/MEP pathway for isoprenoid precursor biosynthesis. The protein is 4-hydroxy-3-methylbut-2-enyl diphosphate reductase of Clostridium tetani (strain Massachusetts / E88).